We begin with the raw amino-acid sequence, 105 residues long: PTS system lactose-specific EIIA component (105 aa).

The 99-residue stretch at 4–102 folds into the PTS EIIA type-3 domain; it reads EEMTLLGFEI…IHHLIELYKR (99 aa). The active-site Tele-phosphohistidine intermediate is His-78. Position 78 is a phosphohistidine; by HPr (His-78). Residue Asp-81 participates in Mg(2+) binding.

Homotrimer. Requires Mg(2+) as cofactor.

The protein localises to the cytoplasm. The phosphoenolpyruvate-dependent sugar phosphotransferase system (sugar PTS), a major carbohydrate active transport system, catalyzes the phosphorylation of incoming sugar substrates concomitantly with their translocation across the cell membrane. The enzyme II LacEF PTS system is involved in lactose transport. The protein is PTS system lactose-specific EIIA component of Lactococcus lactis subsp. lactis (Streptococcus lactis).